A 254-amino-acid polypeptide reads, in one-letter code: MKIGVYGASGRIGKLLLEELKGGYKGLELSSVFVRQKCETDFSAFSHAPLVTNDLKAFVRACECVIDFSLPKGLDHLLEALLECPKILVSGTTGLEKETLEKMQQLALKAPLLHAHNMSIGIMMLNQLAFLASLKLKDADIEIVETHHNLKKDAPSGTALSLYETCAKARGYDEKNALTTHREGLRSKESIGIAAVRGGDVAGKHTIGFYLEGEYIELSHTATNRSIFAKGALEAALWLKDKTAKKYEINEMFG.

Position 7 to 12 (7 to 12 (GASGRI)) interacts with NAD(+). Arg35 provides a ligand contact to NADP(+). Residues 91–93 (GTT) and 115–118 (AHNM) contribute to the NAD(+) site. His147 serves as the catalytic Proton donor/acceptor. Residue His148 participates in (S)-2,3,4,5-tetrahydrodipicolinate binding. The Proton donor role is filled by Lys151. 157 to 158 (GT) is a binding site for (S)-2,3,4,5-tetrahydrodipicolinate.

Belongs to the DapB family.

The protein resides in the cytoplasm. It carries out the reaction (S)-2,3,4,5-tetrahydrodipicolinate + NAD(+) + H2O = (2S,4S)-4-hydroxy-2,3,4,5-tetrahydrodipicolinate + NADH + H(+). The catalysed reaction is (S)-2,3,4,5-tetrahydrodipicolinate + NADP(+) + H2O = (2S,4S)-4-hydroxy-2,3,4,5-tetrahydrodipicolinate + NADPH + H(+). It functions in the pathway amino-acid biosynthesis; L-lysine biosynthesis via DAP pathway; (S)-tetrahydrodipicolinate from L-aspartate: step 4/4. Functionally, catalyzes the conversion of 4-hydroxy-tetrahydrodipicolinate (HTPA) to tetrahydrodipicolinate. This chain is 4-hydroxy-tetrahydrodipicolinate reductase, found in Helicobacter pylori (strain P12).